The following is a 262-amino-acid chain: Type III pantothenate kinase (262 aa).

ATP is bound at residue 6–13 (DVGNTNAV). Substrate contacts are provided by residues Tyr100 and 107-110 (GADR). The active-site Proton acceptor is Asp109. Asp129 is a binding site for K(+). Residue Thr132 coordinates ATP. Thr184 provides a ligand contact to substrate.

The protein belongs to the type III pantothenate kinase family. In terms of assembly, homodimer. NH4(+) serves as cofactor. Requires K(+) as cofactor.

The protein localises to the cytoplasm. It catalyses the reaction (R)-pantothenate + ATP = (R)-4'-phosphopantothenate + ADP + H(+). It participates in cofactor biosynthesis; coenzyme A biosynthesis; CoA from (R)-pantothenate: step 1/5. Catalyzes the phosphorylation of pantothenate (Pan), the first step in CoA biosynthesis. This is Type III pantothenate kinase from Bacillus cytotoxicus (strain DSM 22905 / CIP 110041 / 391-98 / NVH 391-98).